Reading from the N-terminus, the 457-residue chain is 3-isopropylmalate dehydratase large subunit (457 aa).

3 residues coordinate [4Fe-4S] cluster: cysteine 337, cysteine 397, and cysteine 400.

The protein belongs to the aconitase/IPM isomerase family. LeuC type 1 subfamily. As to quaternary structure, heterodimer of LeuC and LeuD. The cofactor is [4Fe-4S] cluster.

The catalysed reaction is (2R,3S)-3-isopropylmalate = (2S)-2-isopropylmalate. It functions in the pathway amino-acid biosynthesis; L-leucine biosynthesis; L-leucine from 3-methyl-2-oxobutanoate: step 2/4. In terms of biological role, catalyzes the isomerization between 2-isopropylmalate and 3-isopropylmalate, via the formation of 2-isopropylmaleate. The polypeptide is 3-isopropylmalate dehydratase large subunit (Oenococcus oeni (strain ATCC BAA-331 / PSU-1)).